Consider the following 350-residue polypeptide: m7GpppX diphosphatase (350 aa).

Residue serine 2 is modified to N-acetylserine. At serine 60 the chain carries Phosphoserine. Threonine 66 bears the Phosphothreonine mark. Residue threonine 66 is modified to Phosphothreonine; by YAK1. Tyrosine 70 carries the phosphotyrosine modification. At threonine 120 the chain carries Phosphothreonine. Residues glutamate 171, lysine 196, and 259–270 (HYQPSYYHFHIH) each bind substrate. The short motif at 266-270 (HFHIH) is the Histidine triad motif element. The Nucleophile role is filled by histidine 268.

The protein belongs to the HIT family. As to quaternary structure, homodimer. Forms heterodimer with DCS2; the interaction inhibits the DCS1 scavenger decapping activity during post-diauxic growth. In terms of processing, phosphorylated. Phosphorylation occurs upon glucose deprivation.

Its subcellular location is the cytoplasm. It localises to the perinuclear region. It is found in the P-body. The enzyme catalyses a 5'-end (N(7)-methyl 5'-triphosphoguanosine)-ribonucleoside in mRNA + H2O = N(7)-methyl-GMP + a 5'-end diphospho-ribonucleoside in mRNA + 2 H(+). With respect to regulation, the hydrolytic product 7-methylguanosine diphosphate (m7GDP) efficiently inhibits the decapping scavenger activity and acts as a competitive inhibitor in vitro. In terms of biological role, decapping scavenger enzyme that catalyzes the cleavage of a residual cap structure following the degradation of mRNAs by the 3'-&gt;5' exosome-mediated mRNA decay pathway. Hydrolyzes cap analog structures like 7-methylguanosine nucleoside triphosphate (m7GpppG) and tri-methyl guanosine nucleoside triphosphate (m3(2,2,7)GpppG) with up to 10 nucleotide substrates (small capped oligoribonucleotides) and specifically releases 5'-phosphorylated RNA fragments and 7-methylguanosine monophosphate (m7GMP) or tri-methyl guanosine nucleoside monophosphate (m3(2,2,7)GMP), respectively. Does not hydrolyze unmethylated cap analog (GpppG) and shows no decapping activity on intact m7GpppG-capped mRNA molecules longer than 25 nucleotides. Does not hydrolyze 7-methylguanosine diphosphate (m7GDP) and tri-methylguanosine diphosphate (m3(2,2,7)GDP) to (m(7)GMP) and m3(2,2,7)GMP, respectively. May also play a role in the 5'-&gt;3 mRNA decay pathway; m7GDP, the downstream product released by the 5'-&gt;3' mRNA mediated decapping activity, may be also converted by DCS1 to m7GMP. Binds to m7GpppG and strongly to m7GDP. May also regulate the 5'-&gt;3' exoribonucleolytic mRNA decay pathway in a cap-independent manner. Negatively regulates trehalase activity. The polypeptide is m7GpppX diphosphatase (Saccharomyces cerevisiae (strain ATCC 204508 / S288c) (Baker's yeast)).